The following is a 204-amino-acid chain: Holliday junction branch migration complex subunit RuvA (204 aa).

The interval 1–64 (MIAQLKGSLA…EDAFLLYGFH (64 aa)) is domain I. The segment at 65 to 143 (SESQRKVFNL…ALPMAAPTTA (79 aa)) is domain II. Positions 144-154 (IGAATMAANPA) are flexible linker. Positions 154-204 (AGLREEVASALLNLGYKPPQVDAALAKLFSAGEITDISVALKGALKLLAPA) are domain III.

Belongs to the RuvA family. In terms of assembly, homotetramer. Forms an RuvA(8)-RuvB(12)-Holliday junction (HJ) complex. HJ DNA is sandwiched between 2 RuvA tetramers; dsDNA enters through RuvA and exits via RuvB. An RuvB hexamer assembles on each DNA strand where it exits the tetramer. Each RuvB hexamer is contacted by two RuvA subunits (via domain III) on 2 adjacent RuvB subunits; this complex drives branch migration. In the full resolvosome a probable DNA-RuvA(4)-RuvB(12)-RuvC(2) complex forms which resolves the HJ.

The protein localises to the cytoplasm. In terms of biological role, the RuvA-RuvB-RuvC complex processes Holliday junction (HJ) DNA during genetic recombination and DNA repair, while the RuvA-RuvB complex plays an important role in the rescue of blocked DNA replication forks via replication fork reversal (RFR). RuvA specifically binds to HJ cruciform DNA, conferring on it an open structure. The RuvB hexamer acts as an ATP-dependent pump, pulling dsDNA into and through the RuvAB complex. HJ branch migration allows RuvC to scan DNA until it finds its consensus sequence, where it cleaves and resolves the cruciform DNA. The protein is Holliday junction branch migration complex subunit RuvA of Magnetococcus marinus (strain ATCC BAA-1437 / JCM 17883 / MC-1).